A 266-amino-acid chain; its full sequence is Phosphatidylglycerol--prolipoprotein diacylglyceryl transferase (266 aa).

The next 4 membrane-spanning stretches (helical) occupy residues 14–34 (FGPLQIHWYGLMYLAGFAFFW), 55–75 (FLFYGALGVILGGRIGYILFY), 91–111 (WKGGMAFHGGLIGVMVAMWLF), and 117–137 (VSMFVVADFVAPMVPVGLFFG). Arg-138 provides a ligand contact to a 1,2-diacyl-sn-glycero-3-phospho-(1'-sn-glycerol). A run of 3 helical transmembrane segments spans residues 172–192 (YPTQLLEALLEGIVLFIILMF), 201–221 (GAASGLFIGLYGLFRFYVEFF), and 235–255 (WVTMGQLLSLPMILIGFALVV).

Belongs to the Lgt family.

It is found in the cell inner membrane. The catalysed reaction is L-cysteinyl-[prolipoprotein] + a 1,2-diacyl-sn-glycero-3-phospho-(1'-sn-glycerol) = an S-1,2-diacyl-sn-glyceryl-L-cysteinyl-[prolipoprotein] + sn-glycerol 1-phosphate + H(+). It participates in protein modification; lipoprotein biosynthesis (diacylglyceryl transfer). In terms of biological role, catalyzes the transfer of the diacylglyceryl group from phosphatidylglycerol to the sulfhydryl group of the N-terminal cysteine of a prolipoprotein, the first step in the formation of mature lipoproteins. The chain is Phosphatidylglycerol--prolipoprotein diacylglyceryl transferase from Hydrogenovibrio crunogenus (strain DSM 25203 / XCL-2) (Thiomicrospira crunogena).